Reading from the N-terminus, the 1334-residue chain is CRISPR-associated endonuclease Cas9 (1334 aa).

The active-site For RuvC-like nuclease domain is the aspartate 10. Positions 10, 765, and 769 each coordinate Mn(2+). In terms of domain architecture, HNH Cas9-type spans 773–924 (TGKGKNNSRP…DKARFIHRQL (152 aa)). Histidine 843 functions as the Proton acceptor for HNH nuclease domain in the catalytic mechanism. Histidine 986 serves as a coordination point for Mn(2+).

It belongs to the CRISPR-associated protein Cas9 family. Subtype II-A subfamily. As to quaternary structure, monomer. Binds crRNA and tracrRNA. Mg(2+) is required as a cofactor.

CRISPR (clustered regularly interspaced short palindromic repeat) is an adaptive immune system that provides protection against mobile genetic elements (viruses, transposable elements and conjugative plasmids). CRISPR clusters contain spacers, sequences complementary to antecedent mobile elements, and target invading nucleic acids. CRISPR clusters are transcribed and processed into CRISPR RNA (crRNA). In type II CRISPR systems correct processing of pre-crRNA requires a trans-encoded small RNA (tracrRNA), endogenous ribonuclease 3 (rnc) and this protein. The tracrRNA serves as a guide for ribonuclease 3-aided processing of pre-crRNA. Subsequently Cas9/crRNA/tracrRNA endonucleolytically cleaves linear or circular dsDNA target complementary to the spacer; Cas9 is inactive in the absence of the 2 guide RNAs (gRNA). Cas9 recognizes the protospacer adjacent motif (PAM) in the CRISPR repeat sequences to help distinguish self versus nonself, as targets within the bacterial CRISPR locus do not have PAMs. PAM recognition is also required for catalytic activity. This chain is CRISPR-associated endonuclease Cas9, found in Listeria innocua serovar 6a (strain ATCC BAA-680 / CLIP 11262).